The sequence spans 101 residues: Putative pterin-4-alpha-carbinolamine dehydratase (101 aa).

It belongs to the pterin-4-alpha-carbinolamine dehydratase family.

It catalyses the reaction (4aS,6R)-4a-hydroxy-L-erythro-5,6,7,8-tetrahydrobiopterin = (6R)-L-erythro-6,7-dihydrobiopterin + H2O. The sequence is that of Putative pterin-4-alpha-carbinolamine dehydratase from Rhodopseudomonas palustris (strain HaA2).